We begin with the raw amino-acid sequence, 428 residues long: Adenylosuccinate synthetase (428 aa).

GTP-binding positions include 11-17 (GDEGKGK) and 39-41 (GHT). The active-site Proton acceptor is aspartate 12. Residues aspartate 12 and glycine 39 each coordinate Mg(2+). Residues 12-15 (DEGK), 37-40 (NAGH), threonine 130, arginine 144, asparagine 226, threonine 241, and arginine 305 each bind IMP. Histidine 40 (proton donor) is an active-site residue. 301–307 (VTTGRKR) is a binding site for substrate. Residues arginine 307, 333 to 335 (KLD), and 415 to 417 (GTG) each bind GTP.

This sequence belongs to the adenylosuccinate synthetase family. Homodimer. It depends on Mg(2+) as a cofactor.

Its subcellular location is the cytoplasm. The catalysed reaction is IMP + L-aspartate + GTP = N(6)-(1,2-dicarboxyethyl)-AMP + GDP + phosphate + 2 H(+). The protein operates within purine metabolism; AMP biosynthesis via de novo pathway; AMP from IMP: step 1/2. Plays an important role in the de novo pathway and in the salvage pathway of purine nucleotide biosynthesis. Catalyzes the first committed step in the biosynthesis of AMP from IMP. The sequence is that of Adenylosuccinate synthetase from Lodderomyces elongisporus (strain ATCC 11503 / CBS 2605 / JCM 1781 / NBRC 1676 / NRRL YB-4239) (Yeast).